The primary structure comprises 158 residues: Transcription elongation factor GreA (158 aa).

A coiled-coil region spans residues Ala-45–Glu-72.

Belongs to the GreA/GreB family.

Its function is as follows. Necessary for efficient RNA polymerase transcription elongation past template-encoded arresting sites. The arresting sites in DNA have the property of trapping a certain fraction of elongating RNA polymerases that pass through, resulting in locked ternary complexes. Cleavage of the nascent transcript by cleavage factors such as GreA or GreB allows the resumption of elongation from the new 3'terminus. GreA releases sequences of 2 to 3 nucleotides. In Xanthomonas campestris pv. campestris (strain ATCC 33913 / DSM 3586 / NCPPB 528 / LMG 568 / P 25), this protein is Transcription elongation factor GreA.